A 345-amino-acid polypeptide reads, in one-letter code: Endochitinase 4 (345 aa).

The N-terminal stretch at 1–27 (MAPLLNTGLVILPLIVSTLLGPMPAFA) is a signal peptide. Residues asparagine 29 and asparagine 89 are each glycosylated (N-linked (GlcNAc...) asparagine). In terms of domain architecture, GH18 spans 41–345 (KVLQGYWENW…TFGDNVKGRL (305 aa)). Residue glutamate 163 is the Proton donor of the active site. N-linked (GlcNAc...) asparagine glycosylation is present at asparagine 316.

The protein belongs to the glycosyl hydrolase 18 family. Chitinase class V subfamily.

It is found in the secreted. It catalyses the reaction Random endo-hydrolysis of N-acetyl-beta-D-glucosaminide (1-&gt;4)-beta-linkages in chitin and chitodextrins.. Its function is as follows. Secreted chitinase involved in the degradation of chitin, a component of the cell walls of fungi and exoskeletal elements of some animals (including worms and arthropods). Participates in the infection process and directly acts in the penetration process of the host cuticle. This chain is Endochitinase 4 (chi4), found in Metarhizium robertsii (strain ARSEF 23 / ATCC MYA-3075) (Metarhizium anisopliae (strain ARSEF 23)).